Reading from the N-terminus, the 263-residue chain is MVAAVARLWWRGLLGASALTRGAGRPSVLLLPVRRESAGADTRPTVRPRNDVAHKQLSAFGEYVAEILPKYVQQVQVSCFNELEVCIHPDGVIPVLTFLRDHTNAQFKSLVDLTAVDVPTRQNRFEIVYNLLSLRFNSRIRVKTYTDELTPIESAVSVFKAANWYEREIWDMFGVFFANHPDLRRILTDYGFEGHPFRKDFPLSGYVELRYDDEVKRVVAEPVELAQEFRKFDLNSPWEAFPVYRQPPESLKLEAGDKKPDAK.

Residues 1–35 (MVAAVARLWWRGLLGASALTRGAGRPSVLLLPVRR) constitute a mitochondrion transit peptide.

This sequence belongs to the complex I 30 kDa subunit family. As to quaternary structure, core subunit of respiratory chain NADH dehydrogenase (Complex I) which is composed of 45 different subunits. Interacts with NDUFAF3. Interacts with RAB5IF. Found in subcomplexes containing subunits NDUFS2, MT-ND1 and NDUFA13.

Its subcellular location is the mitochondrion inner membrane. The catalysed reaction is a ubiquinone + NADH + 5 H(+)(in) = a ubiquinol + NAD(+) + 4 H(+)(out). Core subunit of the mitochondrial membrane respiratory chain NADH dehydrogenase (Complex I) which catalyzes electron transfer from NADH through the respiratory chain, using ubiquinone as an electron acceptor. Essential for the catalytic activity and assembly of complex I. The polypeptide is NADH dehydrogenase [ubiquinone] iron-sulfur protein 3, mitochondrial (NDUFS3) (Gorilla gorilla gorilla (Western lowland gorilla)).